A 347-amino-acid polypeptide reads, in one-letter code: Phosphoribosylformylglycinamidine cyclo-ligase (347 aa).

It belongs to the AIR synthase family.

It is found in the cytoplasm. The catalysed reaction is 2-formamido-N(1)-(5-O-phospho-beta-D-ribosyl)acetamidine + ATP = 5-amino-1-(5-phospho-beta-D-ribosyl)imidazole + ADP + phosphate + H(+). It participates in purine metabolism; IMP biosynthesis via de novo pathway; 5-amino-1-(5-phospho-D-ribosyl)imidazole from N(2)-formyl-N(1)-(5-phospho-D-ribosyl)glycinamide: step 2/2. The protein is Phosphoribosylformylglycinamidine cyclo-ligase of Desulfatibacillum aliphaticivorans.